A 261-amino-acid chain; its full sequence is Small ribosomal subunit protein uS2 (261 aa).

This sequence belongs to the universal ribosomal protein uS2 family.

This chain is Small ribosomal subunit protein uS2, found in Streptococcus mutans serotype c (strain ATCC 700610 / UA159).